An 826-amino-acid polypeptide reads, in one-letter code: Ferric-pyoverdine M114 receptor PbuA (826 aa).

The N-terminal stretch at 1–44 (MSASRFMLRPLTRALLMHGATRTRLAGTGLGLALTLTAAPYVQA) is a signal peptide. The short motif at 110–119 (DGNTVTVLGP) is the TonB box element. A TBDR plug domain is found at 160 to 271 (SLKETPQSVT…TAGGVNFVRK (112 aa)). The 551-residue stretch at 276 to 826 (TAHTQLSLSA…NFVMSVKADF (551 aa)) folds into the TBDR beta-barrel domain. Positions 809–826 (GNFYGDPRNFVMSVKADF) match the TonB C-terminal box motif.

This sequence belongs to the TonB-dependent receptor family.

It is found in the cell outer membrane. Functionally, specific receptor for the siderophore ferric pyoverdine (pseudobactin) M114. The protein is Ferric-pyoverdine M114 receptor PbuA (pbuA) of Pseudomonas sp. (strain M114).